A 445-amino-acid polypeptide reads, in one-letter code: UPF0210 protein SPP_0289 (445 aa).

The protein belongs to the UPF0210 family. In terms of assembly, homodimer.

The chain is UPF0210 protein SPP_0289 from Streptococcus pneumoniae (strain P1031).